A 705-amino-acid polypeptide reads, in one-letter code: MAAVKKIFDEIIETDHKVITEESSKSILKNYGVKVPPYALVTSAEEAAKEAKKIGFPLVMKVVSPQILHKTDVGGVKVGLDNVADVKKTFTDMYGRLSKKKGVNVKGILLEKMVPKGVELIVGIQNDSQFGPIIMVGMGGIMTEVMKDVAFRMLPITTSDAKSMLNELKGSKLLKGFRGSEPIDTNLVAKMLVNIGKLGVENADYINSIDFNPVIVYPKSHYVVDAKIILNKEKKKNSISKAKPSITDMETFFTPKSVALVGASASPGKIGNSILDSLVNYDFKGKVYPINPKADKIFGQKCYPSVADIPGKVDLVVVSVDLSMTPPVLEDCAKKGVHSVVIVSGGGKELGGERAAYEAEVARLSKKHKIRIIGPNCIGMFNAANRLDCAFQGQERMVRSKLGPVAFFSQSGTMGISMLESADTFGLSKMISFGNRSDVDEADMIWYAANDPQTKVIGLYVEGFGDGRKFINVAKRVMKEKKKPIVIWKSGRTAAGAKQAASHTGSLGGSNAIIMGAFKQAGIISVDSYQELAGVLKALAWQPAAKGNKVAMTSNGAGPMIGGIDQLEKFGLAIGKLSPKLLKKMKSRFPPAVPIHNGNPADVGGGATADDYQFVIQQFMDEKNIDIAMPWFVFQDDPLEETIVDHLAGFQKKAKKPLLCGGNGGPYTEKMIKLIEKHNVPVYQDLRTWVAAASALHQWGKISKK.

An ATP-grasp domain is found at 25–61 (KSILKNYGVKVPPYALVTSAEEAAKEAKKIGFPLVMK). ATP is bound at residue 51–61 (AKKIGFPLVMK).

It in the N-terminal section; belongs to the acetate CoA ligase beta subunit family. This sequence in the C-terminal section; belongs to the acetate CoA ligase alpha subunit family. It depends on Mg(2+) as a cofactor. The cofactor is Mn(2+).

It carries out the reaction 3-hydroxypropanoate + ATP + CoA = 3-hydroxypropanoyl-CoA + ADP + phosphate. Functionally, involved in thaumarchaeal hydroxypropionate/hydroxybutyrate (HP/HB) cycle, a modified version of the autotrophic HP/HB cycle of Crenarchaeota. Catalyzes the formation of 3-hydroxypropionyl-CoA, ADP and phosphate from 3-hydroxypropionate, coenzyme A (CoA) and ATP. Can also use 4-hydroxybutyrate, propionate and butyrate, with poor catalytic efficiency. The polypeptide is 3-hydroxypropionate--CoA ligase [ADP-forming] (Nitrosopumilus maritimus (strain SCM1)).